The sequence spans 209 residues: Auxin-binding protein ABP19a (209 aa).

Positions 1–18 are cleaved as a signal peptide; it reads MIFPIFFTFFLLLSSSHA. Cysteine 24 and cysteine 39 are oxidised to a cystine. A Cupin type-1 domain is found at 53–199; sequence SGLGIAGNTT…TTFLDAAQIK (147 aa). Asparagine 60 is a glycosylation site (N-linked (GlcNAc...) asparagine). Positions 101, 103, 108, and 147 each coordinate Mn(2+).

It belongs to the germin family. In terms of assembly, interacts with ABP20.

The protein localises to the secreted. It is found in the extracellular space. The protein resides in the apoplast. Its subcellular location is the cell wall. In terms of biological role, probable receptor for the plant growth-promoting hormone auxin. The polypeptide is Auxin-binding protein ABP19a (ABP19A) (Prunus persica (Peach)).